Reading from the N-terminus, the 310-residue chain is Beta-lactamase AST-1 (310 aa).

An N-terminal signal peptide occupies residues 1 to 31 (MTFSALPFRRADRRRLLAAALAACALTLTAA). Cys-32 carries N-palmitoyl cysteine lipidation. Cys-32 carries the S-diacylglycerol cysteine lipid modification. Catalysis depends on Ser-91, which acts as the Acyl-ester intermediate. Ser-151 is a binding site for substrate. Glu-187 serves as the catalytic Proton acceptor. A substrate-binding site is contributed by 255-257 (KTG).

Belongs to the class-A beta-lactamase family.

The protein resides in the cell membrane. The enzyme catalyses a beta-lactam + H2O = a substituted beta-amino acid. Inhibited by clavulanic acid. Confers high levels of resistance to amoxicillin, benzylpenicillin, piperacillin, ticarcillin and cephalothin. Not active against ceftazidime, cefotaxime and aztreonam. This Nocardia asteroides protein is Beta-lactamase AST-1 (bla).